The sequence spans 158 residues: Eukaryotic translation initiation factor 5A (158 aa).

Lys-51 is subject to Hypusine.

The protein belongs to the eIF-5A family. Post-translationally, lys-51 undergoes hypusination, a unique post-translational modification that consists in the addition of a butylamino group from spermidine to lysine side chain, leading to the formation of the unusual amino acid hypusine. eIF-5As are the only known proteins to undergo this modification, which is essential for their function.

The protein resides in the cytoplasm. Its function is as follows. Translation factor that promotes translation elongation and termination, particularly upon ribosome stalling at specific amino acid sequence contexts. Binds between the exit (E) and peptidyl (P) site of the ribosome and promotes rescue of stalled ribosome: specifically required for efficient translation of polyproline-containing peptides as well as other motifs that stall the ribosome. Acts as a ribosome quality control (RQC) cofactor by joining the RQC complex to facilitate peptidyl transfer during CAT tailing step. The polypeptide is Eukaryotic translation initiation factor 5A (ANB1) (Candida albicans (strain SC5314 / ATCC MYA-2876) (Yeast)).